The sequence spans 1058 residues: Isoleucine--tRNA ligase (1058 aa).

The 'HIGH' region motif lies at 48 to 58; that stretch reads PYTTGHIHLGT. Residues 596–600 carry the 'KMSKS' region motif; sequence KMSKS. ATP is bound at residue Lys-599.

The protein belongs to the class-I aminoacyl-tRNA synthetase family. IleS type 2 subfamily. As to quaternary structure, monomer. It depends on Zn(2+) as a cofactor.

Its subcellular location is the cytoplasm. It catalyses the reaction tRNA(Ile) + L-isoleucine + ATP = L-isoleucyl-tRNA(Ile) + AMP + diphosphate. Functionally, catalyzes the attachment of isoleucine to tRNA(Ile). As IleRS can inadvertently accommodate and process structurally similar amino acids such as valine, to avoid such errors it has two additional distinct tRNA(Ile)-dependent editing activities. One activity is designated as 'pretransfer' editing and involves the hydrolysis of activated Val-AMP. The other activity is designated 'posttransfer' editing and involves deacylation of mischarged Val-tRNA(Ile). This is Isoleucine--tRNA ligase from Methanosarcina mazei (strain ATCC BAA-159 / DSM 3647 / Goe1 / Go1 / JCM 11833 / OCM 88) (Methanosarcina frisia).